A 425-amino-acid chain; its full sequence is Serine--tRNA ligase (425 aa).

Residue threonine 230–glutamate 232 participates in L-serine binding. Arginine 261–glutamate 263 is an ATP binding site. Residue glutamate 284 participates in L-serine binding. Position 348–351 (glutamate 348–serine 351) interacts with ATP. Residue serine 384 coordinates L-serine.

Belongs to the class-II aminoacyl-tRNA synthetase family. Type-1 seryl-tRNA synthetase subfamily. Homodimer. The tRNA molecule binds across the dimer.

It localises to the cytoplasm. The catalysed reaction is tRNA(Ser) + L-serine + ATP = L-seryl-tRNA(Ser) + AMP + diphosphate + H(+). The enzyme catalyses tRNA(Sec) + L-serine + ATP = L-seryl-tRNA(Sec) + AMP + diphosphate + H(+). Its pathway is aminoacyl-tRNA biosynthesis; selenocysteinyl-tRNA(Sec) biosynthesis; L-seryl-tRNA(Sec) from L-serine and tRNA(Sec): step 1/1. Functionally, catalyzes the attachment of serine to tRNA(Ser). Is also able to aminoacylate tRNA(Sec) with serine, to form the misacylated tRNA L-seryl-tRNA(Sec), which will be further converted into selenocysteinyl-tRNA(Sec). The chain is Serine--tRNA ligase from Streptococcus equi subsp. zooepidemicus (strain H70).